The primary structure comprises 284 residues: L-ribulose-5-phosphate 3-epimerase UlaE (284 aa).

The protein belongs to the L-ribulose-5-phosphate 3-epimerase family.

The catalysed reaction is L-ribulose 5-phosphate = L-xylulose 5-phosphate. The protein operates within cofactor degradation; L-ascorbate degradation; D-xylulose 5-phosphate from L-ascorbate: step 3/4. Its function is as follows. Catalyzes the isomerization of L-xylulose-5-phosphate to L-ribulose-5-phosphate. Is involved in the anaerobic L-ascorbate utilization. The polypeptide is L-ribulose-5-phosphate 3-epimerase UlaE (Shigella sonnei (strain Ss046)).